A 378-amino-acid chain; its full sequence is Spermidine/putrescine import ATP-binding protein PotA (378 aa).

Residues 18 to 248 form the ABC transporter domain; it reads VQLAGIRKCF…PKNLFVTGFI (231 aa). Residue 50-57 coordinates ATP; that stretch reads GPSGCGKT.

This sequence belongs to the ABC transporter superfamily. Spermidine/putrescine importer (TC 3.A.1.11.1) family. In terms of assembly, the complex is composed of two ATP-binding proteins (PotA), two transmembrane proteins (PotB and PotC) and a solute-binding protein (PotD).

The protein localises to the cell inner membrane. It catalyses the reaction ATP + H2O + polyamine-[polyamine-binding protein]Side 1 = ADP + phosphate + polyamineSide 2 + [polyamine-binding protein]Side 1.. Its function is as follows. Part of the ABC transporter complex PotABCD involved in spermidine/putrescine import. Responsible for energy coupling to the transport system. This Shigella flexneri serotype 5b (strain 8401) protein is Spermidine/putrescine import ATP-binding protein PotA.